The sequence spans 327 residues: MGGSALNQGVLEGDDAPGQSLYERLSQRMLDISGDRGVLKDVIREGAGDLVAPDASVLVKYSGYLEHMDRPFDSNYFRKTPRLMKLGEDITLWGMELGLLSMRRGELARFLFKPNYAYGTLGCPPLIPPNTTVLFEIELLDFLDCAESDKFCALSAEQQDQFPLQKVLKVAATEREFGNYLFRQNRFYDAKVRYKRALLLLRRRSAPPEEQHLVEAAKLPVLLNLSFTYLKLDRPTIALCYGEQALIIDQKNAKALFRCGQACLLLTEYQKARDFLVRAQKEQPFNHDINNELKKLASCYRDYVDKEKEMWHRMFAPCGDGSTAGES.

In terms of domain architecture, PPIase FKBP-type spans 54-143; it reads DASVLVKYSG…LFEIELLDFL (90 aa). TPR repeat units lie at residues 171–204, 219–252, and 253–286; these read AATE…LRRR, LPVL…DQKN, and AKAL…QPFN.

It belongs to the FKBP6 family. As to quaternary structure, interacts (via TPR repeats) with HSP90. Interacts with HSP72/HSPA2 and CLTC. Interacts with GAPDH; leading to inhibit GAPDH catalytic activity. In terms of tissue distribution, detected in all tissues examined, with higher expression in testis, heart, skeletal muscle, liver, and kidney.

The protein resides in the cytoplasm. Its subcellular location is the nucleus. Has an essential role in spermatogenesis. It is required to repress transposable elements and prevent their mobilization, which is essential for the germline integrity. Acts via the piRNA metabolic process, which mediates the repression of transposable elements during meiosis by forming complexes composed of piRNAs and Piwi proteins and govern the methylation and subsequent repression of transposons. Acts as a co-chaperone via its interaction with HSP90 and is required for the piRNA amplification process, the secondary piRNA biogenesis. May be required together with HSP90 in removal of 16 nucleotide ping-pong by-products from Piwi complexes, possibly facilitating turnover of Piwi complexes. In Homo sapiens (Human), this protein is Inactive peptidyl-prolyl cis-trans isomerase FKBP6 (FKBP6).